Here is a 196-residue protein sequence, read N- to C-terminus: Ribosome maturation factor RimP (196 aa).

The segment covering 131–145 has biased composition (basic residues); the sequence is KKKAGKKSQGKKAGK. The disordered stretch occupies residues 131–153; that stretch reads KKKAGKKSQGKKAGKKTPQAPVQ.

The protein belongs to the RimP family.

It localises to the cytoplasm. Functionally, required for maturation of 30S ribosomal subunits. This is Ribosome maturation factor RimP from Corynebacterium urealyticum (strain ATCC 43042 / DSM 7109).